The sequence spans 173 residues: Alpha-crystallin A chain (173 aa).

Met-1 is modified (N-acetylmethionine). Residues 1-63 (MDVTIQHPWF…RTVLDSGISE (63 aa)) form a required for complex formation with BFSP1 and BFSP2 region. Deamidated glutamine; partial is present on Gln-6. Phosphoserine is present on Ser-45. 2 positions are modified to deamidated glutamine; partial: Gln-50 and Gln-90. In terms of domain architecture, sHSP spans 52–162 (LFRTVLDSGI…SHSERAIPVS (111 aa)). An N6-acetyllysine modification is found at Lys-99. A Zn(2+)-binding site is contributed by His-100. At Asn-101 the chain carries Deamidated asparagine; partial. Positions 102 and 107 each coordinate Zn(2+). Ser-122 bears the Phosphoserine mark. Asn-123 is subject to Deamidated asparagine; partial. Cys-131 and Cys-142 are joined by a disulfide. The residue at position 147 (Gln-147) is a Deamidated glutamine; partial. The segment at 149–173 (GMDASHSERAIPVSREEKPSSAPSS) is disordered. Residues 153-167 (SHSERAIPVSREEKP) are compositionally biased toward basic and acidic residues. His-154 is a Zn(2+) binding site. O-linked (GlcNAc) serine glycosylation is present at Ser-162.

The protein belongs to the small heat shock protein (HSP20) family. As to quaternary structure, heteromer composed of three CRYAA and one CRYAB subunits. Inter-subunit bridging via zinc ions enhances stability, which is crucial as there is no protein turn over in the lens. Can also form homodimers and homotetramers (dimers of dimers) which serve as the building blocks of homooligomers. Within homooligomers, the zinc-binding motif is created from residues of 3 different molecules. His-100 and Glu-102 from one molecule are ligands of the zinc ion, and His-107 and His-154 residues from additional molecules complete the site with tetrahedral coordination geometry. Part of a complex required for lens intermediate filament formation composed of BFSP1, BFSP2 and CRYAA. Undergoes age-dependent proteolytical cleavage at the C-terminus.

Its subcellular location is the cytoplasm. It localises to the nucleus. Contributes to the transparency and refractive index of the lens. In its oxidized form (absence of intramolecular disulfide bond), acts as a chaperone, preventing aggregation of various proteins under a wide range of stress conditions. Required for the correct formation of lens intermediate filaments as part of a complex composed of BFSP1, BFSP2 and CRYAA. This chain is Alpha-crystallin A chain (CRYAA), found in Loxodonta africana (African elephant).